Here is a 283-residue protein sequence, read N- to C-terminus: Protein FAM78A (283 aa).

It belongs to the FAM78 family.

The protein is Protein FAM78A (FAM78A) of Homo sapiens (Human).